We begin with the raw amino-acid sequence, 339 residues long: Phosphate acyltransferase (339 aa).

It belongs to the PlsX family. In terms of assembly, homodimer. Probably interacts with PlsY.

The protein resides in the cytoplasm. The enzyme catalyses a fatty acyl-[ACP] + phosphate = an acyl phosphate + holo-[ACP]. It participates in lipid metabolism; phospholipid metabolism. Functionally, catalyzes the reversible formation of acyl-phosphate (acyl-PO(4)) from acyl-[acyl-carrier-protein] (acyl-ACP). This enzyme utilizes acyl-ACP as fatty acyl donor, but not acyl-CoA. The chain is Phosphate acyltransferase from Moorella thermoacetica (strain ATCC 39073 / JCM 9320).